A 343-amino-acid polypeptide reads, in one-letter code: 4-hydroxy-2-oxovalerate aldolase 2 (343 aa).

One can recognise a Pyruvate carboxyltransferase domain in the interval 8-260 (ITVHDMSLRD…ETGVDVFAIS (253 aa)). 16–17 (RD) provides a ligand contact to substrate. Asp17 is a Mn(2+) binding site. Catalysis depends on His20, which acts as the Proton acceptor. 2 residues coordinate substrate: Ser170 and His199. Positions 199 and 201 each coordinate Mn(2+). A substrate-binding site is contributed by Tyr290.

This sequence belongs to the 4-hydroxy-2-oxovalerate aldolase family.

It carries out the reaction (S)-4-hydroxy-2-oxopentanoate = acetaldehyde + pyruvate. The sequence is that of 4-hydroxy-2-oxovalerate aldolase 2 from Burkholderia lata (strain ATCC 17760 / DSM 23089 / LMG 22485 / NCIMB 9086 / R18194 / 383).